The primary structure comprises 375 residues: Deoxyribonuclease-2 (375 aa).

The first 21 residues, 1 to 21 (MGLSPAAVLIFLLLGVSQTYA), serve as a signal peptide directing secretion. N-linked (GlcNAc...) asparagine glycosylation occurs at N131.

This sequence belongs to the DNase II family.

The catalysed reaction is Endonucleolytic cleavage to nucleoside 3'-phosphates and 3'-phosphooligonucleotide end-products.. Its function is as follows. Hydrolyzes DNA under acidic conditions with a preference for double-stranded DNA. Implicated in apoptosis. The protein is Deoxyribonuclease-2 (nuc-1) of Caenorhabditis elegans.